The sequence spans 544 residues: MAKRIIYNEQARRALERGIDILAESVAVTLGPKGRNVVLEKKFGAPQIINDGVTIAKEIELEDHIENTGVALIRQAASKTNDAAGDGTTTATVLAHAMVKAGLRNVAAGANAITLKKGIDKATEFLVGKIEENSKPISDSTAIAQCGTIAAGNDEEVGEMIANAMDKVGKEGVISLEEGKSMTTELEVTEGMRFDKGYISPYFATDTERMEAVLDEPYILLTDKKIALVQDLVPVLEQIAKTGKPLVIIAEDIEKEALATLVVNRLRGVLNVAAVKAPGFGDRRKAMLEDMAVLTNGQLITEDAGLKLENATLEMLGTGRRITINKETTTIVAEGNEKAVTARCDQIKKQMDETDSSYDKEKLQERLAKLAGGVAVIKVGAATETEMKDKKLRLEDAINATKAAVEEGIVPGGGTTLAHLAPILKEWADKALSGEELIGANIVEASLTSPLMRIAENAGSNGAVIAENVKSKPFNDGFNAATGDYVDMSAAGIVDPAKVTRSGLQNAASIAGMVLTTECIVADLPEKKDAAPAGAPGMGGDFDY.

Residues 29-32 (TLGP), 86-90 (DGTTT), glycine 413, 479-481 (NAA), and aspartate 495 contribute to the ATP site.

This sequence belongs to the chaperonin (HSP60) family. Forms a cylinder of 14 subunits composed of two heptameric rings stacked back-to-back. Interacts with the co-chaperonin GroES.

The protein resides in the cytoplasm. It carries out the reaction ATP + H2O + a folded polypeptide = ADP + phosphate + an unfolded polypeptide.. In terms of biological role, together with its co-chaperonin GroES, plays an essential role in assisting protein folding. The GroEL-GroES system forms a nano-cage that allows encapsulation of the non-native substrate proteins and provides a physical environment optimized to promote and accelerate protein folding. The chain is Chaperonin GroEL 2 from Prochlorococcus marinus subsp. pastoris (strain CCMP1986 / NIES-2087 / MED4).